Here is a 163-residue protein sequence, read N- to C-terminus: Transcription elongation factor GreA (163 aa).

Residues 11 to 38 adopt a coiled-coil conformation; the sequence is FKQLEKELDRLKKERPGVIQAIKEAREE.

Belongs to the GreA/GreB family.

Functionally, necessary for efficient RNA polymerase transcription elongation past template-encoded arresting sites. The arresting sites in DNA have the property of trapping a certain fraction of elongating RNA polymerases that pass through, resulting in locked ternary complexes. Cleavage of the nascent transcript by cleavage factors such as GreA or GreB allows the resumption of elongation from the new 3'terminus. GreA releases sequences of 2 to 3 nucleotides. The polypeptide is Transcription elongation factor GreA (Nitratidesulfovibrio vulgaris (strain ATCC 29579 / DSM 644 / CCUG 34227 / NCIMB 8303 / VKM B-1760 / Hildenborough) (Desulfovibrio vulgaris)).